The sequence spans 347 residues: 4-hydroxy-2-oxovalerate aldolase (347 aa).

A Pyruvate carboxyltransferase domain is found at 2–252 (ILISDATLRD…DTRTTFERVM (251 aa)). A substrate-binding site is contributed by 10 to 11 (RD). Aspartate 11 contributes to the Mn(2+) binding site. Histidine 14 (proton acceptor) is an active-site residue. The substrate site is built by serine 164 and histidine 191. Histidine 191 and histidine 193 together coordinate Mn(2+).

It belongs to the 4-hydroxy-2-oxovalerate aldolase family.

The catalysed reaction is (S)-4-hydroxy-2-oxopentanoate = acetaldehyde + pyruvate. The polypeptide is 4-hydroxy-2-oxovalerate aldolase (Burkholderia pseudomallei (strain 1106a)).